The sequence spans 595 residues: DNA ligase (595 aa).

Residues aspartate 32–aspartate 36, serine 81–leucine 82, and glutamate 113 contribute to the NAD(+) site. Residue lysine 115 is the N6-AMP-lysine intermediate of the active site. Residues arginine 136, glutamate 178, lysine 296, and lysine 320 each coordinate NAD(+). Residues cysteine 414, cysteine 417, cysteine 432, and cysteine 438 each contribute to the Zn(2+) site.

The protein belongs to the NAD-dependent DNA ligase family. LigA subfamily. The cofactor is Mg(2+). Mn(2+) serves as cofactor.

It catalyses the reaction NAD(+) + (deoxyribonucleotide)n-3'-hydroxyl + 5'-phospho-(deoxyribonucleotide)m = (deoxyribonucleotide)n+m + AMP + beta-nicotinamide D-nucleotide.. DNA ligase that catalyzes the formation of phosphodiester linkages between 5'-phosphoryl and 3'-hydroxyl groups in double-stranded DNA using NAD as a coenzyme and as the energy source for the reaction. It is essential for DNA replication and repair of damaged DNA. The chain is DNA ligase from Blochmanniella pennsylvanica (strain BPEN).